A 396-amino-acid chain; its full sequence is MAKLDAYFGEYGGQYVPQILVPALDQLEQAFIDAQADEDFRAEFMTLLQEYAGRPTALTLCRNLTKGTKTKLYLKREDLLHGGAHKTNQVLGQALLALRMGKKEIIAETGAGQHGVATALACALLGLKCRVYMGAKDIERQSPNVFRMELMGAEVIPVHSGSATLKDACNEALRDWSATYETAHYLLGTAAGPHPFPTIVREFQRMIGEETKMQILAREGRLPDAVIACVGGGSNAIGMFADFIKEENVRLIGVEPAGKGIDTDQHGAPLKHGKTGIFFGMKAPLMQDEHGQIEESYSVSAGLDFPSVGPQHAHLNSIGRAEYGSVTDDEALEAFQILAKGEGIIPALESSHALAYALQMAHSEPEKEQLLVVNLSGRGDKDIFTVHDILKEKGEI.

Residue K86 is modified to N6-(pyridoxal phosphate)lysine.

It belongs to the TrpB family. In terms of assembly, tetramer of two alpha and two beta chains. The cofactor is pyridoxal 5'-phosphate.

It carries out the reaction (1S,2R)-1-C-(indol-3-yl)glycerol 3-phosphate + L-serine = D-glyceraldehyde 3-phosphate + L-tryptophan + H2O. It functions in the pathway amino-acid biosynthesis; L-tryptophan biosynthesis; L-tryptophan from chorismate: step 5/5. In terms of biological role, the beta subunit is responsible for the synthesis of L-tryptophan from indole and L-serine. The sequence is that of Tryptophan synthase beta chain from Aliivibrio salmonicida (strain LFI1238) (Vibrio salmonicida (strain LFI1238)).